Reading from the N-terminus, the 136-residue chain is SPbeta prophage-derived uncharacterized protein YonI (136 aa).

The chain is SPbeta prophage-derived uncharacterized protein YonI (yonI) from Bacillus subtilis (strain 168).